A 475-amino-acid polypeptide reads, in one-letter code: Argininosuccinate lyase (475 aa).

Belongs to the lyase 1 family. Argininosuccinate lyase subfamily.

The protein localises to the cytoplasm. It catalyses the reaction 2-(N(omega)-L-arginino)succinate = fumarate + L-arginine. Its pathway is amino-acid biosynthesis; L-arginine biosynthesis; L-arginine from L-ornithine and carbamoyl phosphate: step 3/3. This Streptomyces griseus subsp. griseus (strain JCM 4626 / CBS 651.72 / NBRC 13350 / KCC S-0626 / ISP 5235) protein is Argininosuccinate lyase.